The chain runs to 205 residues: High frequency lysogenization protein HflD homolog (205 aa).

This sequence belongs to the HflD family.

It localises to the cytoplasm. The protein resides in the cell inner membrane. The protein is High frequency lysogenization protein HflD homolog of Shewanella baltica (strain OS223).